Consider the following 32-residue polypeptide: Delta-conotoxin-like CnVIC (32 aa).

Disulfide bonds link cysteine 3–cysteine 18, cysteine 10–cysteine 22, and cysteine 17–cysteine 27. 4-hydroxyproline is present on residues proline 6 and proline 14.

Belongs to the conotoxin O1 superfamily. As to expression, expressed by the venom duct.

The protein localises to the secreted. In terms of biological role, delta-conotoxins bind to site 6 of voltage-gated sodium channels (Nav) and inhibit the inactivation process. This toxin acts on Nav1.2/SCN2A, Nav1.4/SCN4A, Nav1.5/SCN5A (weak activity), Nav1.6/SCN8A (EC(50)=2.5 uM). In Conus consors (Singed cone), this protein is Delta-conotoxin-like CnVIC.